Reading from the N-terminus, the 262-residue chain is Acyl-[acyl-carrier-protein]--UDP-N-acetylglucosamine O-acyltransferase (262 aa).

This sequence belongs to the transferase hexapeptide repeat family. LpxA subfamily. As to quaternary structure, homotrimer.

The protein resides in the cytoplasm. The enzyme catalyses a (3R)-hydroxyacyl-[ACP] + UDP-N-acetyl-alpha-D-glucosamine = a UDP-3-O-[(3R)-3-hydroxyacyl]-N-acetyl-alpha-D-glucosamine + holo-[ACP]. The protein operates within glycolipid biosynthesis; lipid IV(A) biosynthesis; lipid IV(A) from (3R)-3-hydroxytetradecanoyl-[acyl-carrier-protein] and UDP-N-acetyl-alpha-D-glucosamine: step 1/6. In terms of biological role, involved in the biosynthesis of lipid A, a phosphorylated glycolipid that anchors the lipopolysaccharide to the outer membrane of the cell. This Verminephrobacter eiseniae (strain EF01-2) protein is Acyl-[acyl-carrier-protein]--UDP-N-acetylglucosamine O-acyltransferase.